A 372-amino-acid polypeptide reads, in one-letter code: Probable O-methyltransferase 2 (372 aa).

Positions 216, 259, and 273 each coordinate S-adenosyl-L-methionine. Catalysis depends on histidine 277, which acts as the Proton acceptor.

It belongs to the class I-like SAM-binding methyltransferase superfamily. Cation-independent O-methyltransferase family. COMT subfamily. As to quaternary structure, homodimer. In terms of tissue distribution, expressed predominantly in root hairs.

Functionally, O-methyltransferase of unknown substrate specificity. Not active on resorcinol, orcinol, guaiacol, eugenol, ferulic acid, p-coumaric acid, catechol, caffeic acid or monomethyl ethers of resorcinol or orcinol. The chain is Probable O-methyltransferase 2 (OMT2) from Sorghum bicolor (Sorghum).